We begin with the raw amino-acid sequence, 80 residues long: Acyl carrier protein (80 aa).

Residues 4–79 (EAILEKVRSI…DAVKYIEDKQ (76 aa)) enclose the Carrier domain. Ser39 bears the O-(pantetheine 4'-phosphoryl)serine mark.

It belongs to the acyl carrier protein (ACP) family. Post-translationally, 4'-phosphopantetheine is transferred from CoA to a specific serine of apo-ACP by AcpS. This modification is essential for activity because fatty acids are bound in thioester linkage to the sulfhydryl of the prosthetic group.

The protein localises to the cytoplasm. Its pathway is lipid metabolism; fatty acid biosynthesis. Its function is as follows. Carrier of the growing fatty acid chain in fatty acid biosynthesis. The chain is Acyl carrier protein from Prochlorococcus marinus (strain MIT 9313).